The chain runs to 268 residues: Undecaprenyl-diphosphatase (268 aa).

Transmembrane regions (helical) follow at residues 47–67 (FTIL…FAKL), 83–103 (FVIG…LAGG), 109–129 (LFNP…LLWV), 144–164 (FPLP…IPGV), 184–204 (AAEF…VYDL), 217–237 (LIVA…VKSF), and 246–266 (FTLF…ALAL).

The protein belongs to the UppP family.

It is found in the cell inner membrane. The catalysed reaction is di-trans,octa-cis-undecaprenyl diphosphate + H2O = di-trans,octa-cis-undecaprenyl phosphate + phosphate + H(+). In terms of biological role, catalyzes the dephosphorylation of undecaprenyl diphosphate (UPP). Confers resistance to bacitracin. This chain is Undecaprenyl-diphosphatase, found in Rhodopseudomonas palustris (strain BisB18).